Here is a 533-residue protein sequence, read N- to C-terminus: Acid-sensing ion channel 3 (533 aa).

Over 1-19 (MKPRSGLEEAQRRQASDIR) the chain is Cytoplasmic. The helical transmembrane segment at 20–40 (VFASSCTMHGLGHIFGPGGLT) threads the bilayer. A Phosphothreonine; by PKC modification is found at threonine 40. The Extracellular segment spans residues 41–435 (LRRGLWATAV…EQKAAYEVSE (395 aa)). 7 disulfide bridges follow: cysteine 93/cysteine 187, cysteine 165/cysteine 172, cysteine 283/cysteine 372, cysteine 317/cysteine 368, cysteine 321/cysteine 366, cysteine 330/cysteine 352, and cysteine 332/cysteine 344. N-linked (GlcNAc...) asparagine glycosylation is present at asparagine 176. The segment at 286-310 (ASLDPDDFDPEPSDPLGSPRPRPSP) is disordered. An N-linked (GlcNAc...) asparagine glycan is attached at asparagine 400. The chain crosses the membrane as a helical span at residues 436 to 456 (LLGDIGGQMGLFIGASLLTIL). Positions 449-451 (GAS) match the GAS motif; ion selectivity filter motif. The Cytoplasmic segment spans residues 457–533 (EILDYLCEVF…HRTCYLVTRL (77 aa)). Residue serine 523 is modified to Phosphoserine; by PKC. Positions 530–533 (VTRL) match the PDZ-binding motif.

The protein belongs to the amiloride-sensitive sodium channel (TC 1.A.6) family. ASIC3 subfamily. Can form homotrimeric channels. Heterotrimer; forms functional heterotrimers producing channel with different properties. Forms heterotrimers with ASIC2; gives rise to a biphasic current with a sustained current which discriminates poorly between Na(+) and K(+). Interacts with STOM; inhibits ASIC3 acid-evoked current. Interacts with LIN7B (via PDZ domain); increases ASIC3 expression at the plasma membrane. Interacts with MAGI1 (via PDZ domain); probably regulates ASIC3. Interacts with GOPC (via PDZ domain); probably regulates ASIC3. Interacts with DLG4 (via PDZ domain); reduces ASIC3 expression at the plasma membrane. In terms of processing, could be phosphorylated by PKC, promoting activation of ASIC2/ASIC3 heterotrimers. Expressed in sciatic nerve and dorsal root ganglion (at protein level). Expressed in sensory neurons of dorsal root ganglion. Expressed in Golgi interneurons in the granular layer. Also found in superior cervical ganglia, spinal cord and brain stem.

It localises to the cell membrane. Its subcellular location is the cytoplasm. The catalysed reaction is Na(+)(in) = Na(+)(out). The enzyme catalyses K(+)(in) = K(+)(out). It catalyses the reaction Ca(2+)(in) = Ca(2+)(out). With respect to regulation, inhibited by the diuretic drug amiloride. Inhibited by gadolinium ions. Inhibited by extracellular Ca(2+). Activated by lactate. Salicylic acid, diclofenac and aspirin inhibit the sustained current component. Activated by the vertebrate neuropeptides NPFF and NPSF, and the related FMRFamide. Specifically and reversibly inhibited by the a sea anemone toxin APETx2. ASIC3-containing channels are potentiated by the cono-RFamide CNF-Tx1.1, and probably CNF-Tx1.2 and CNF-Tx1.3 (AC P0DL71). Its function is as follows. Forms pH-gated heterotrimeric sodium channels that act as postsynaptic excitatory receptors in the nervous system. Upon extracellular acidification, these channels generate a biphasic current with a fast inactivating and a slow sustained phase. ASIC3 is more sensitive to protons and gates between closed, open, and desensitized states faster than other ASICs. Displays high selectivity for sodium ions but can also permit the permeation of other cations. As a neuronal acid sensor, probably contributes to mechanoreception, acid nociception, and heat nociception. By forming heterotrimeric channels with ASIC2, generates a biphasic current with a fast inactivating and a slow sustained phase, which in sensory neurons is proposed to mediate the pain induced by acidosis that occurs in ischemic, damaged or inflamed tissues. The sequence is that of Acid-sensing ion channel 3 from Rattus norvegicus (Rat).